Consider the following 510-residue polypeptide: ATP synthase subunit alpha, mitochondrial (510 aa).

Glycine 171–threonine 178 lines the ATP pocket.

F-type ATP synthases have 2 components, the catalytic core F(1) and the membrane-embedded component F(0), linked together by a central stalk and a peripheral stalk. The central stalk, also called rotor shaft, is often seen as part of F(1). The peripheral stalk is seen as part of F(0). F(0) contains the membrane channel next to the rotor. F-type ATP synthases form dimers but each monomer functions independently in ATP generation. The dimer consists of 18 different polypeptides: ATP1 (subunit alpha, part of F(1), 3 molecules per monomer), ATP2 (subunit beta, part of F(1), 3 molecules per monomer), ATP3 (subunit gamma, part of the central stalk), ATP4 (subunit b, part of the peripheral stalk), ATP5/OSCP (subunit 5/OSCP, part of the peripheral stalk), ATP6 (subunit a, part of the peripheral stalk), ATP7 (subunit d, part of the peripheral stalk), ATP8 (subunit 8, part of the peripheral stalk), OLI1 (subunit c, part of the rotor, 10 molecules per monomer), ATP14 (subunit h, part of the peripheral stalk), ATP15 (subunit epsilon, part of the central stalk), ATP16 (subunit delta, part of the central stalk), ATP17 (subunit f, part of the peripheral stalk), ATP18 (subunit i/j, part of the peripheral stalk). Dimer-specific subunits are ATP19 (subunit k, at interface between monomers), ATP20 (subunit g, at interface between monomers), TIM11 (subunit e, at interface between monomers). Also contains subunit L.

The protein resides in the mitochondrion inner membrane. Mitochondrial membrane ATP synthase (F(1)F(0) ATP synthase or Complex V) produces ATP from ADP in the presence of a proton gradient across the membrane which is generated by electron transport complexes of the respiratory chain. F-type ATP synthases consist of two structural domains, F(1) - containing the extramembraneous catalytic core, and F(0) - containing the membrane proton channel, linked together by a central stalk and a peripheral stalk. During catalysis, ATP synthesis in the catalytic domain of F(1) is coupled via a rotary mechanism of the central stalk subunits to proton translocation. Subunits alpha/ATP1 and beta/ATP2 form the catalytic core in F(1). Rotation of the central stalk against the surrounding alpha/ATP1(3)beta/ATP2(3) subunits leads to hydrolysis of ATP in three separate catalytic sites on the beta/ATP2 subunits. Subunit alpha/ATP1 does not bear the catalytic high-affinity ATP-binding sites. The sequence is that of ATP synthase subunit alpha, mitochondrial from Pichia angusta (Yeast).